The primary structure comprises 175 residues: Inosine/xanthosine triphosphatase (175 aa).

Position 8 to 13 (8 to 13) interacts with substrate; it reads TTNPAK. Positions 38 and 68 each coordinate Mg(2+). 68–69 serves as a coordination point for substrate; it reads EA.

This sequence belongs to the YjjX NTPase family. In terms of assembly, homodimer. Mg(2+) serves as cofactor. Mn(2+) is required as a cofactor.

It catalyses the reaction XTP + H2O = XDP + phosphate + H(+). It carries out the reaction ITP + H2O = IDP + phosphate + H(+). Phosphatase that hydrolyzes non-canonical purine nucleotides such as XTP and ITP to their respective diphosphate derivatives. Probably excludes non-canonical purines from DNA/RNA precursor pool, thus preventing their incorporation into DNA/RNA and avoiding chromosomal lesions. In Escherichia coli O127:H6 (strain E2348/69 / EPEC), this protein is Inosine/xanthosine triphosphatase (yjjX).